The sequence spans 454 residues: NADH-quinone oxidoreductase subunit H (454 aa).

The next 9 helical transmembrane spans lie at 18 to 38 (WWLV…TVLF), 88 to 108 (VVYV…IAVI), 131 to 151 (LPIA…GIVL), 172 to 192 (MISY…YSGS), 206 to 226 (WYIV…VGET), 256 to 276 (FMLA…TLFL), 296 to 316 (WWPM…FIWL), 328 to 348 (LMKL…MLVA), and 360 to 380 (FADI…LSFV). Positions 395-454 (AEEPAAFDPMAGGFPVPPLPGQTLPPVPRRRPRRDRELIVSGGPDTASDGPANGKEASDG) are disordered. Pro residues predominate over residues 409 to 421 (PVPPLPGQTLPPV).

This sequence belongs to the complex I subunit 1 family. As to quaternary structure, NDH-1 is composed of 14 different subunits. Subunits NuoA, H, J, K, L, M, N constitute the membrane sector of the complex.

It localises to the cell membrane. It carries out the reaction a quinone + NADH + 5 H(+)(in) = a quinol + NAD(+) + 4 H(+)(out). Its function is as follows. NDH-1 shuttles electrons from NADH, via FMN and iron-sulfur (Fe-S) centers, to quinones in the respiratory chain. The immediate electron acceptor for the enzyme in this species is believed to be ubiquinone. Couples the redox reaction to proton translocation (for every two electrons transferred, four hydrogen ions are translocated across the cytoplasmic membrane), and thus conserves the redox energy in a proton gradient. This subunit may bind ubiquinone. The chain is NADH-quinone oxidoreductase subunit H from Streptomyces avermitilis (strain ATCC 31267 / DSM 46492 / JCM 5070 / NBRC 14893 / NCIMB 12804 / NRRL 8165 / MA-4680).